We begin with the raw amino-acid sequence, 225 residues long: Cytochrome c oxidase subunit 2 (225 aa).

At 1-26 (MMTWSQMSFSDMNSPIMEQMVFFHDH) the chain is on the mitochondrial intermembrane side. A helical membrane pass occupies residues 27 to 48 (SMMIILMITILTIYMITNIMMN). Topologically, residues 49-62 (NLLSRSMMEGQEIE) are mitochondrial matrix. The helical transmembrane segment at 63–82 (IIWTIIPAITLIFIAIPSLH) threads the bilayer. At 83–225 (LLYLTDETFN…KNFINFINSS (143 aa)) the chain is on the mitochondrial intermembrane side. Cu cation is bound by residues His160, Cys195, Glu197, Cys199, His203, and Met206. Position 197 (Glu197) interacts with Mg(2+).

Belongs to the cytochrome c oxidase subunit 2 family. In terms of assembly, component of the cytochrome c oxidase (complex IV, CIV), a multisubunit enzyme composed of a catalytic core of 3 subunits and several supernumerary subunits. The complex exists as a monomer or a dimer and forms supercomplexes (SCs) in the inner mitochondrial membrane with ubiquinol-cytochrome c oxidoreductase (cytochrome b-c1 complex, complex III, CIII). Cu cation is required as a cofactor.

Its subcellular location is the mitochondrion inner membrane. The enzyme catalyses 4 Fe(II)-[cytochrome c] + O2 + 8 H(+)(in) = 4 Fe(III)-[cytochrome c] + 2 H2O + 4 H(+)(out). In terms of biological role, component of the cytochrome c oxidase, the last enzyme in the mitochondrial electron transport chain which drives oxidative phosphorylation. The respiratory chain contains 3 multisubunit complexes succinate dehydrogenase (complex II, CII), ubiquinol-cytochrome c oxidoreductase (cytochrome b-c1 complex, complex III, CIII) and cytochrome c oxidase (complex IV, CIV), that cooperate to transfer electrons derived from NADH and succinate to molecular oxygen, creating an electrochemical gradient over the inner membrane that drives transmembrane transport and the ATP synthase. Cytochrome c oxidase is the component of the respiratory chain that catalyzes the reduction of oxygen to water. Electrons originating from reduced cytochrome c in the intermembrane space (IMS) are transferred via the dinuclear copper A center (CU(A)) of subunit 2 and heme A of subunit 1 to the active site in subunit 1, a binuclear center (BNC) formed by heme A3 and copper B (CU(B)). The BNC reduces molecular oxygen to 2 water molecules using 4 electrons from cytochrome c in the IMS and 4 protons from the mitochondrial matrix. The polypeptide is Cytochrome c oxidase subunit 2 (COII) (Rhipicephalus sanguineus (Brown dog tick)).